The chain runs to 434 residues: Guanosine-inosine kinase (434 aa).

Residues 40–45 (DQTLVD), 93–97 (GTIGN), and Arg198 each bind GMP. ATP is bound by residues 284 to 289 (TAGPIG), Gly357, and Asn402.

This sequence belongs to the carbohydrate kinase PfkB family. Requires Mg(2+) as cofactor.

It carries out the reaction guanosine + ATP = GMP + ADP + H(+). The catalysed reaction is inosine + ATP = IMP + ADP + H(+). Its pathway is purine metabolism; IMP biosynthesis via salvage pathway; IMP from inosine: step 1/1. The protein operates within purine metabolism; GMP biosynthesis via salvage pathway. Its function is as follows. Catalyzes the phosphorylation of guanosine and inosine to GMP and IMP, respectively. The protein is Guanosine-inosine kinase of Escherichia coli O157:H7.